Here is a 462-residue protein sequence, read N- to C-terminus: tRNA pseudouridine(32) synthase, mitochondrial (462 aa).

The N-terminal 24 residues, 1–24 (MQRNNRLRNLFTVPVIMARQLKRN), are a transit peptide targeting the mitochondrion. Residues 127–188 (KLVDVFISEF…HEPPVTSRPI (62 aa)) enclose the S4 RNA-binding domain. Residue aspartate 238 is part of the active site.

Belongs to the pseudouridine synthase RluA family.

Its subcellular location is the mitochondrion. It carries out the reaction uridine(32) in tRNA = pseudouridine(32) in tRNA. In terms of biological role, responsible for synthesis of pseudouridine from uracil-32 in mitochondrial transfer RNAs. This Saccharomyces cerevisiae (strain ATCC 204508 / S288c) (Baker's yeast) protein is tRNA pseudouridine(32) synthase, mitochondrial (PUS9).